The following is a 738-amino-acid chain: MDLQQLEEQARQAALKDIQNMLQRPGQLEKVEQYRHRIARKKASVEALLKTGMQGQLDGVRVGLKQLETCMQDVREVRRRMDEVERLLRGVPEVYDALEVVREENTKHSQYATAMENLKHIFNVDASVQKTMALIEDDKLLNAHQCLADLENSRDDLLYELHKQPKQHASDKITLKRHFEKVDTVSQELEKKLRLILSRTLNTLRKKPTIIVTALRIIEREEKNDQFALQQQKVTGFLPPGRPKAWRRMIMDVLQQSVITRIEGSKLEERADNKMWLVRDLEILRQIILEDLRVVKSLCVPCFPPHYDIFGEYVKFYHEGLSSYLDNIVRSGLEGNEYVSMMAWVTHTYPGVELMSHPDLNVDVHRQIGTLLRPEHLKALEDEYLQNMQRNFQEWMTKAAETEKQEWFTETVPDQDEEYYHTSAPVIIFQMIDQHLQVTNTIHQELTFKALVMSIQQVEIFGQTYLKNVIELKEHHFRNRDQIKYFTHYIITIVNNSQQMVELAQQMKQLYWPKSRTEHYEDFERLLATFQRIRAHAASYLLEEAFLDMECHFNDLFTAKWLASNIAVDTICVTLDDYFQDYNHLRPNNFEMVINEAQKLLAKRYIRALLSKRLSKPRAECDAITRKIKTEAKRFKLFFEKIAPKISLSDSPLDLISTLSALLSSDIELLVLDLHTLLGSYPSLNEDHLVRLFYIRNDVKAAEVREKVQDAMKSKKAMVSIAKQDCIFKEIVFSDKLW.

The stretch at 28–91 (LEKVEQYRHR…DEVERLLRGV (64 aa)) forms a coiled coil.

The protein belongs to the SEC6 family. The exocyst complex is composed of Sec3/Exoc1, Sec5/Exoc2, Sec6/Exoc3, Sec8/Exoc4, Sec10/Exoc5, Sec15/Exoc6, Exo70/Exoc7 and Exo84/Exoc8.

Its function is as follows. Component of the exocyst complex involved in the docking of exocytic vesicles with fusion sites on the plasma membrane. This Drosophila melanogaster (Fruit fly) protein is Exocyst complex component 3.